A 458-amino-acid polypeptide reads, in one-letter code: MSLYEHAALPLASSPSILGPISGGRNRGNIQLQSIPIEFQAVVFAGFGNSLYPLTGSDALPKALLPIGNKPMLHYPLYWLEAAGFTSAILICMEEAEAHINAWLRSGYEGHMRIHVEAPTILDDSKSSADALRAVSHLIKNDFVCLSCDSIVGLPPIYGLDKFRLDNPSALAVYSPVLKYEHITSQSKEIDAKQLIGIEEKTSRLLYAKSSADVGSDFTFRMSLLWKHPRVTLNTNLSDAHIFVFKHWVIDLIREKESISSIRGDLIPYLVKCQYQKSFTVRENIQRFLSSPNNIDNYDGGLSSQEIKINALIAKDGIICSRANNLPNYFELNKCIAKLTPEQRLVDVTVSERALVGADCMVNEGTTIKDNSNIKKSIIGKNCVIGKGVVVSNSILMDNIVVEDGVRLESCIVASGAQIGAKSKLRECEIGVDHRVEAGRIARGERLVDMEKIETDMD.

The residue at position 291 (S291) is a Phosphoserine.

The protein belongs to the eIF-2B gamma/epsilon subunits family. Component of the translation initiation factor 2B (eIF2B) complex which is a heterodecamer of two sets of five different subunits: alpha, beta, gamma, delta and epsilon. Subunits alpha, beta and delta comprise a regulatory subcomplex and subunits epsilon and gamma comprise a catalytic subcomplex. Within the complex, the hexameric regulatory complex resides at the center, with the two heterodimeric catalytic subcomplexes bound on opposite sides.

It localises to the cytoplasm. Its subcellular location is the cytosol. In terms of biological role, acts as a component of the translation initiation factor 2B (eIF2B) complex, which catalyzes the exchange of GDP for GTP on the eukaryotic initiation factor 2 (eIF2) complex gamma subunit. Its guanine nucleotide exchange factor activity is repressed when bound to eIF2 complex phosphorylated on the alpha subunit, thereby limiting the amount of methionyl-initiator methionine tRNA available to the ribosome and consequently global translation is repressed. The protein is Translation initiation factor eIF2B subunit gamma (tif223) of Schizosaccharomyces pombe (strain 972 / ATCC 24843) (Fission yeast).